The chain runs to 942 residues: Inter-alpha-trypsin inhibitor heavy chain H5 (942 aa).

The N-terminal stretch at 1-16 (MLLLLGLCLGLSLCVG) is a signal peptide. Residues 35–161 (VPRQVRLLQR…KAAFFLSYEE (127 aa)) form the VIT domain. N-linked (GlcNAc...) asparagine glycosylation is found at N97 and N127. Disordered regions lie at residues 116-136 (KKSG…NGEK) and 208-227 (SRQR…PSTV). Residues N231, N421, and N508 are each glycosylated (N-linked (GlcNAc...) asparagine). One can recognise a VWFA domain in the interval 295 to 478 (NVVFVLDSSA…SQLIGFYDEI (184 aa)). The segment at 550-571 (QKAGKDVTGSPRPGGDGEGDTN) is disordered. N-linked (GlcNAc...) asparagine glycans are attached at residues N776, N795, and N862.

It belongs to the ITIH family. In terms of tissue distribution, abundantly expressed in placenta. Less abundant expression in mammary gland and ovary. Expression is barely detectable levels in all other tissues tested.

It is found in the secreted. In terms of biological role, may act as a tumor suppressor. The protein is Inter-alpha-trypsin inhibitor heavy chain H5 (ITIH5) of Homo sapiens (Human).